The following is a 512-amino-acid chain: UDP-N-acetylmuramate--L-alanine ligase (512 aa).

ATP is bound at residue 132-138; sequence GAHGKTT.

Belongs to the MurCDEF family.

The protein resides in the cytoplasm. The enzyme catalyses UDP-N-acetyl-alpha-D-muramate + L-alanine + ATP = UDP-N-acetyl-alpha-D-muramoyl-L-alanine + ADP + phosphate + H(+). It participates in cell wall biogenesis; peptidoglycan biosynthesis. Its function is as follows. Cell wall formation. The chain is UDP-N-acetylmuramate--L-alanine ligase from Bifidobacterium longum (strain DJO10A).